We begin with the raw amino-acid sequence, 92 residues long: Small ribosomal subunit protein uS19c (92 aa).

It belongs to the universal ribosomal protein uS19 family.

The protein localises to the plastid. It localises to the chloroplast. In terms of biological role, protein S19 forms a complex with S13 that binds strongly to the 16S ribosomal RNA. This chain is Small ribosomal subunit protein uS19c, found in Tupiella akineta (Green alga).